Here is a 66-residue protein sequence, read N- to C-terminus: Light-harvesting protein B-800-850 alpha chain B (66 aa).

Over 1 to 11 (MNQGRIWTVVN) the chain is Cytoplasmic. Residues 12–35 (PGVGLPLLLGSVTVIAILVHYAVL) traverse the membrane as a helical segment. Position 31 (H31) interacts with a bacteriochlorophyll. The Periplasmic portion of the chain corresponds to 36–66 (SNTTWFPKYWNGATVAAPAAAPAPAAPAAKK).

It belongs to the antenna complex alpha subunit family. In terms of assembly, the core complex is formed by different alpha and beta chains, binding bacteriochlorophyll molecules, and arranged most probably in tetrameric structures disposed around the reaction center. The non-pigmented gamma chains may constitute additional components.

The protein localises to the cell inner membrane. Its function is as follows. Antenna complexes are light-harvesting systems, which transfer the excitation energy to the reaction centers. This chain is Light-harvesting protein B-800-850 alpha chain B (pucAB), found in Rhodopseudomonas palustris (strain ATCC BAA-98 / CGA009).